Reading from the N-terminus, the 508-residue chain is Lysine--tRNA ligase (508 aa).

2 residues coordinate Mg(2+): glutamate 418 and glutamate 425.

It belongs to the class-II aminoacyl-tRNA synthetase family. As to quaternary structure, homodimer. Mg(2+) is required as a cofactor.

It localises to the cytoplasm. It catalyses the reaction tRNA(Lys) + L-lysine + ATP = L-lysyl-tRNA(Lys) + AMP + diphosphate. This Burkholderia pseudomallei (strain 1710b) protein is Lysine--tRNA ligase.